Consider the following 334-residue polypeptide: Ferrochelatase (334 aa).

Residues histidine 207 and glutamate 288 each contribute to the Fe cation site.

This sequence belongs to the ferrochelatase family.

It localises to the cytoplasm. The enzyme catalyses heme b + 2 H(+) = protoporphyrin IX + Fe(2+). The protein operates within porphyrin-containing compound metabolism; protoheme biosynthesis; protoheme from protoporphyrin-IX: step 1/1. Its function is as follows. Catalyzes the ferrous insertion into protoporphyrin IX. This is Ferrochelatase from Helicobacter pylori (strain P12).